The chain runs to 403 residues: Neuromedin U receptor homolog nmur-2 (403 aa).

At 1 to 27 (MSQCTVEYNVSEITEYVLSTLGERCQS) the chain is on the extracellular side. The helical transmembrane segment at 28–48 (AGIVIPTVIIYGTIFLLGLFG) threads the bilayer. Residues 49–68 (NICTCIVIAANKSMHNPTNY) lie on the Cytoplasmic side of the membrane. Residues 69–89 (YLFSLAVSDIIALILGLPMEF) form a helical membrane-spanning segment. Over 90 to 109 (YQSLDYSYPYRFSEGICKAR) the chain is Extracellular. The helical transmembrane segment at 110 to 130 (AFLIEFTSYASIMIICCFSFE) threads the bilayer. At 131–151 (RWLAICHPLRSKIFSTLWRAN) the chain is on the cytoplasmic side. The helical transmembrane segment at 152–172 (VLIILAWTISFVCALPIAFIV) threads the bilayer. Residues 173–216 (QINKLPLPEDAKYQPWTNKVSTDGIFVLHTEFCAMNQSRPDQQK) lie on the Extracellular side of the membrane. Residues 217–237 (MIIIFAFTVFFVIPAIAIVIM) form a helical membrane-spanning segment. The Cytoplasmic segment spans residues 238-268 (YAHIAVQLESSEIDLKGDKMVKKRRNKSNRT). Residues 269-289 (VLKMLLSVVITFFICWLPFHI) traverse the membrane as a helical segment. Over 290–304 (QRLLSVYTTWSETTT) the chain is Extracellular. A helical transmembrane segment spans residues 305–325 (ISPPVQFLSMIVFYISGFCYY). At 326–403 (SNSAANPILY…PHRKLEVHNY (78 aa)) the chain is on the cytoplasmic side.

Belongs to the G-protein coupled receptor 1 family.

The protein resides in the membrane. In terms of biological role, putative G protein-coupled receptor for pyrokinin-like neuropeptide derived from the processing of the neuropeptide precursor capa-1. In Caenorhabditis elegans, this protein is Neuromedin U receptor homolog nmur-2.